The chain runs to 391 residues: Cyclin-B1-2 (391 aa).

It belongs to the cyclin family. Cyclin AB subfamily.

In Oryza sativa subsp. japonica (Rice), this protein is Cyclin-B1-2 (CYCB1-2).